Consider the following 291-residue polypeptide: Bis(5'-nucleosyl)-tetraphosphatase, symmetrical (291 aa).

Belongs to the Ap4A hydrolase family.

It carries out the reaction P(1),P(4)-bis(5'-adenosyl) tetraphosphate + H2O = 2 ADP + 2 H(+). Hydrolyzes diadenosine 5',5'''-P1,P4-tetraphosphate to yield ADP. In Coxiella burnetii (strain RSA 331 / Henzerling II), this protein is Bis(5'-nucleosyl)-tetraphosphatase, symmetrical.